The sequence spans 79 residues: Exodeoxyribonuclease 7 small subunit (79 aa).

It belongs to the XseB family. Heterooligomer composed of large and small subunits.

It is found in the cytoplasm. The enzyme catalyses Exonucleolytic cleavage in either 5'- to 3'- or 3'- to 5'-direction to yield nucleoside 5'-phosphates.. In terms of biological role, bidirectionally degrades single-stranded DNA into large acid-insoluble oligonucleotides, which are then degraded further into small acid-soluble oligonucleotides. In Syntrophus aciditrophicus (strain SB), this protein is Exodeoxyribonuclease 7 small subunit.